Consider the following 206-residue polypeptide: Small ribosomal subunit protein uS4 (206 aa).

Positions serine 96–alanine 158 constitute an S4 RNA-binding domain.

Belongs to the universal ribosomal protein uS4 family. Part of the 30S ribosomal subunit. Contacts protein S5. The interaction surface between S4 and S5 is involved in control of translational fidelity.

Its function is as follows. One of the primary rRNA binding proteins, it binds directly to 16S rRNA where it nucleates assembly of the body of the 30S subunit. In terms of biological role, with S5 and S12 plays an important role in translational accuracy. This chain is Small ribosomal subunit protein uS4, found in Francisella tularensis subsp. mediasiatica (strain FSC147).